Reading from the N-terminus, the 6930-residue chain is Replicase polyprotein 1ab (6930 aa).

Residues 10–131 form the CoV Nsp1 globular domain; that stretch reads LKSMVVTTLK…DIDIQIRKYG (122 aa). A BetaCoV Nsp1 C-terminal domain is found at 149–175; sequence DPGPDVGPYLDFPDNCCPTKPKAKRGG. The CoV Nsp2 N-terminal domain maps to 177–431; it reads VYLSDQYGFD…ELVEYLIEGI (255 aa). Residues C312, C315, C331, and C333 each contribute to the Zn(2+) site. Residues 312–333 form a C4 region; the sequence is CSYCDYYGWTPLKDIGTVNCLC. The CoV Nsp2 middle domain occupies 432-644; it reads RVDADTLDNP…CDLLTTIMSK (213 aa). The CoV Nsp2 C-terminal domain maps to 646-772; it reads LTSVKWAGCK…LGKAFRLRGG (127 aa). Residues 775–885 enclose the Ubiquitin-like 1 domain; sequence SKVTFGDEEV…MYFSLEDAVP (111 aa). The 168-residue stretch at 930–1097 folds into the Macro 1 domain; that stretch reads MTTPCGYTKI…LYERALATSF (168 aa). A disordered region spans residues 1188–1207; that stretch reads KRPPPIVPQQTVEQQPQEIS. The segment covering 1195–1206 has biased composition (low complexity); the sequence is PQQTVEQQPQEI. In terms of domain architecture, Macro 2 spans 1216-1340; it reads LVDVVSMSFS…LYRAYFNGVF (125 aa). The DPUP domain occupies 1345–1417; that stretch reads TAVQDFVVDI…VSKARAYLET (73 aa). The 56-residue stretch at 1423–1478 folds into the Ubiquitin-like 2 domain; that stretch reads EPLIKVLTTVDGINYSTVLVSTAQSYRAQIGTVFCDGHDWSNKNPMPTDEGTHLYK. Residues 1492–1757 form the Peptidase C16 domain; sequence EYYGVDDSNI…RTTIDPDFSK (266 aa). C1533 acts as the For PL-PRO activity in catalysis. Zn(2+) is bound by residues C1610, C1613, C1645, and C1647. Residues 1610–1647 form a C4-type zinc finger; the sequence is CEHCGVSQMVFTGTDACTFYGSVVLDDLYAPVSVVCQC. Residues H1694 and D1708 each act as for PL-PRO activity in the active site. The region spanning 1770 to 1870 is the Nucleic acid-binding domain; sequence PIEVVAAPKL…PLLSTVVVNT (101 aa). The G2M domain occupies 1883 to 2012; that stretch reads PVNNETSEEP…KTADFVRSTN (130 aa). Transmembrane regions (helical) follow at residues 2015-2035, 2040-2060, and 2081-2101; these read SKCV…WLLV, IVKV…TCVL, and YMLY…WLSE. The HD1 stretch occupies residues 2015 to 2238; it reads SKCVGLLCLF…IVIAFLWLCY (224 aa). One can recognise a 3Ecto domain in the interval 2105–2162; it reads PSLVTRFKYFLGIVMPCDYVLVNETGTGWLHHLCMAGMDSLDYPALRMQQHRYGSPYN. Cysteines 2121 and 2138 form a disulfide. The next 3 membrane-spanning stretches (helical) occupy residues 2162–2182, 2183–2203, and 2218–2238; these read NYTY…YTPA, LPIV…PIPL, and LVPF…WLCY. Positions 2239–2329 are Y1; the sequence is KGFLHVRYGC…QFKRPIIHTD (91 aa). The CoV Nsp3 Y domain maps to 2239–2610; the sequence is KGFLHVRYGC…MVTPFKIIGG (372 aa). The Zn(2+) site is built by H2243, C2248, C2253, C2256, C2289, H2292, C2296, and C2299. The segment at 2243–2256 is ZF1; it reads HVRYGCNNVACLMC. Residues 2289-2299 are ZF2; that stretch reads CTKHNWNCVSC. Residues 2330–2425 form a Y2 region; it reads EAYYEVTSVE…LVDKRMVGVV (96 aa). Residues 2330-2610 are coV-Y; the sequence is EAYYEVTSVE…MVTPFKIIGG (281 aa). A Y3 region spans residues 2426-2509; the sequence is GDDATIARAM…SCIRLCHQEG (84 aa). The interval 2510–2610 is Y4; that stretch reads WEWTTDSWNN…MVTPFKIIGG (101 aa). A run of 7 helical transmembrane segments spans residues 2621-2641, 2719-2739, 2865-2885, 2887-2907, 2916-2936, 2946-2966, and 2970-2990; these read LIHV…PWYI, VGTT…SVCY, AFDL…AVDI, TSIL…YYLL, YSGV…VLCL, IYAM…ACMM, and FLIM…IVVV. The interval 2621–2990 is HD2; sequence LIHVFMLLVV…WVTVLYIVVV (370 aa). A Nsp4C domain is found at 3007–3103; sequence VQVGDLAFHS…RCSVASAALQ (97 aa). The region spanning 3104 to 3409 is the Peptidase C30 domain; it reads AGLTRMAHPS…GRQMLGVKLQ (306 aa). Active-site for 3CL-PRO activity residues include H3144 and C3248. Helical transmembrane passes span 3423-3443, 3449-3469, 3474-3494, 3517-3537, 3569-3589, 3592-3612, and 3620-3640; these read FAII…WTFV, TLLL…SLLI, TYLT…NFQY, VIGT…LLSV, VAIS…GVAC, LYAA…ILLL, and LVCY…FNLI. Positions 3423-3640 are HD3; that stretch reads FAIIFVLTIL…TCYFGVFNLI (218 aa). The RdRp Nsp7 cofactor domain occupies 3700–3782; that stretch reads SNMTDLKCTS…SILENNSVLQ (83 aa). In terms of domain architecture, RdRp Nsp8 cofactor spans 3783–3982; the sequence is AVASEFSNLS…QQATSPVKLQ (200 aa). Residues 3983–4094 enclose the Nsp9 ssRNA-binding domain; that stretch reads NNELMPQTVK…GTLACTVRLH (112 aa). Residues 4095–4233 enclose the ExoN/MTase coactivator domain; that stretch reads AGSATEVASN…CSSLREINLQ (139 aa). Zn(2+) contacts are provided by C4168, C4171, H4177, C4184, C4211, C4214, C4222, and C4224. Zinc fingers lie at residues 4168–4184 and 4211–4224; these read CLYC…SGVC and CAVC…GCPC. A NiRAN domain is found at 4239–4494; it reads FLNRVRGTSG…AAECHVDGDF (256 aa). Mn(2+)-binding residues include N4442 and D4451. The 99-residue stretch at 4499–4597 folds into the Nsp12 Interface domain; the sequence is RVWDICKYDY…MNQDIRQHAQ (99 aa). H4528, C4534, C4539, C4543, and C4720 together coordinate Zn(2+). The region spanning 4598–5165 is the Nsp12 RNA-dependent RNA polymerase domain; sequence RLSLRELLVY…NMYMESATLQ (568 aa). The rdRp Fingers N-ter stretch occupies residues 4600-4814; the sequence is SLRELLVYAA…HQKMLKSIAA (215 aa). The rdRp Palm N-ter stretch occupies residues 4815–4853; that stretch reads ARGASVVIGTTKFYGGWNRMLRTLCEGVENPHLMGWDYP. In terms of domain architecture, RdRp catalytic spans 4845 to 5007; the sequence is PHLMGWDYPK…CYNADYAQKG (163 aa). The rdRp Fingers C-ter stretch occupies residues 4854–4912; the sequence is KCDRAMPNLLRIFASLILARKHATCCNASERFYRLANECAQVLSEMVLCGGGFYVKPGG. Zn(2+) is bound by residues H4875, C4878, and C4879. The rdRp Palm C-ter stretch occupies residues 4913–5048; the sequence is TSSGDSTTAY…TKGPHEFCSQ (136 aa). Catalysis depends on residues S4992, D4993, and D4994. The tract at residues 5049–5165 is rdRp Thumb; sequence HTMLVDMKGE…NMYMESATLQ (117 aa). Residues 5166 to 5278 form the CV ZBD domain; it reads SVGTCVVCNS…ADFNSLATCD (113 aa). Residues C5170, C5173, C5181, C5184, C5191, C5194, H5198, H5204, C5215, C5220, C5237, and H5240 each contribute to the Zn(2+) site. Positions 5412 to 5603 constitute a (+)RNA virus helicase ATP-binding domain; it reads TKLVGLYPAM…MVAVGPDIFL (192 aa). Residue 5447–5454 participates in ATP binding; it reads GPPGTGKS. A (+)RNA virus helicase C-terminal domain is found at 5604–5778; the sequence is ATCYRCPKEI…VTVGLFKDCA (175 aa). The 219-residue stretch at 5838 to 6056 folds into the ExoN domain; that stretch reads LFITREQAIR…RCLAIHDCFC (219 aa). Active-site residues include D5856, E5858, and E5957. The Zn(2+) site is built by C5973, C5976, C5992, H5995, H6026, C6030, and H6033. Residues H6037 and D6042 contribute to the active site. Residue C6048 coordinates Zn(2+). Residues 6065-6296 enclose the N7-MTase domain; it reads YPIIANELAI…NLWSTFVKLQ (232 aa). 6100-6106 provides a ligand contact to S-adenosyl-L-methionine; the sequence is DIGNPKA. Residues 6180–6194 form a gpppA-binding region; the sequence is CNGGSLYVNQHAFHT. The Zn(2+) site is built by C6218, C6242, C6253, and H6256. Residues 6297-6357 enclose the Nsp15 N-terminal oligomerization domain; the sequence is SLENVAYNVL…NVAFELWAKR (61 aa). The AV-Nsp11N/CoV-Nsp15M domain maps to 6358-6476; it reads SVNVVPEVKL…YAMRKDGAFV (119 aa). One can recognise a NendoU domain in the interval 6493-6630; sequence QPRTQLEIDF…KGGKISTFYP (138 aa). Residues H6523, H6537, K6576, K6679, D6763, K6803, and E6836 contribute to the active site. One can recognise a Nidovirus-type SAM-dependent 2'-O-MTase domain in the interval 6635 to 6928; that stretch reads KQDWKPGYSM…DIGVRGVACS (294 aa).

This sequence belongs to the coronaviruses polyprotein 1ab family. As to quaternary structure, interacts with host PHB and PHB2. Interacts with papain-like protease nsp3 and non-structural protein 6. In terms of assembly, monomer. Homodimer. Only the homodimer shows catalytic activity. As to quaternary structure, interacts with nsp8 and nsp12 to form the replication-transcription complex (RTC): nsp12, nsp7, two subunits of nsp8, and up to two subunits of nsp13. Interacts with nsp7, nsp13 and nsp12 to form the replication-transcription complex (RTC): nsp12, nsp7, two subunits of nsp8, and up to two subunits of nsp13. In terms of assembly, interacts with nsp12. As to quaternary structure, interacts with proofreading exoribonuclease nsp14 and 2'-O-methyltransferase nsp16; these interactions enhance nsp14 and nsp16 enzymatic activities. Interacts with nsp7 and nsp8 to form the replication-transcription complex (RTC): nsp12, nsp7, two subunits of nsp8, and up to two subunits of nsp13. Interacts with nsp9. In terms of assembly, interacts with nsp8 to form the replication-transcription complex (RTC): nsp12, nsp7, two subunits of nsp8, and up to two subunits of nsp13. Requires Mn(2+) as cofactor. The cofactor is Mg(2+). In terms of processing, specific enzymatic cleavages in vivo by its own proteases yield mature proteins. 3CL-PRO and PL-PRO proteinases are autocatalytically processed.

The protein resides in the host membrane. It is found in the host cytoplasm. It localises to the host perinuclear region. Its subcellular location is the host endoplasmic reticulum-Golgi intermediate compartment. It carries out the reaction RNA(n) + a ribonucleoside 5'-triphosphate = RNA(n+1) + diphosphate. The catalysed reaction is ATP + H2O = ADP + phosphate + H(+). The enzyme catalyses Thiol-dependent hydrolysis of ester, thioester, amide, peptide and isopeptide bonds formed by the C-terminal Gly of ubiquitin (a 76-residue protein attached to proteins as an intracellular targeting signal).. It catalyses the reaction a 5'-end (N(7)-methyl 5'-triphosphoguanosine)-ribonucleoside in mRNA + S-adenosyl-L-methionine = a 5'-end (N(7)-methyl 5'-triphosphoguanosine)-(2'-O-methyl-ribonucleoside) in mRNA + S-adenosyl-L-homocysteine + H(+). It carries out the reaction uridylyl-uridylyl-ribonucleotide-RNA = a 3'-end uridylyl-2',3'-cyclophospho-uridine-RNA + a 5'-end dephospho-ribonucleoside-RNA. The catalysed reaction is a 5'-end diphospho-ribonucleoside in mRNA + GTP + H(+) = a 5'-end (5'-triphosphoguanosine)-ribonucleoside in mRNA + diphosphate. The enzyme catalyses a 5'-end (5'-triphosphoguanosine)-ribonucleoside in mRNA + S-adenosyl-L-methionine = a 5'-end (N(7)-methyl 5'-triphosphoguanosine)-ribonucleoside in mRNA + S-adenosyl-L-homocysteine. Functionally, the replicase polyprotein of coronaviruses is a multifunctional protein: it contains the activities necessary for the transcription of negative stranded RNA, leader RNA, subgenomic mRNAs and progeny virion RNA as well as proteinases responsible for the cleavage of the polyprotein into functional products. In terms of biological role, inhibits host translation by interacting with the 40S ribosomal subunit. The nsp1-40S ribosome complex further induces an endonucleolytic cleavage near the 5'UTR of host mRNAs, targeting them for degradation. Viral mRNAs are not susceptible to nsp1-mediated endonucleolytic RNA cleavage thanks to the presence of a 5'-end leader sequence and are therefore protected from degradation. By suppressing host gene expression, nsp1 facilitates efficient viral gene expression in infected cells and evasion from host immune response. Its function is as follows. May play a role in the modulation of host cell survival signaling pathway by interacting with host PHB and PHB2. Indeed, these two proteins play a role in maintaining the functional integrity of the mitochondria and protecting cells from various stresses. Responsible for the cleavages located at the N-terminus of the replicase polyprotein. In addition, PL-PRO possesses a deubiquitinating/deISGylating activity and processes both 'Lys-48'- and 'Lys-63'-linked polyubiquitin chains from cellular substrates. Participates together with nsp4 in the assembly of virally-induced cytoplasmic double-membrane vesicles necessary for viral replication. Antagonizes innate immune induction of type I interferon by blocking the phosphorylation, dimerization and subsequent nuclear translocation of host IRF3. Also prevents host NF-kappa-B signaling. Functionally, participates in the assembly of virally-induced cytoplasmic double-membrane vesicles necessary for viral replication. In terms of biological role, cleaves the C-terminus of replicase polyprotein at 11 sites. Recognizes substrates containing the core sequence [ILMVF]-Q-|-[SGACN]. Also able to bind an ADP-ribose-1''-phosphate (ADRP). Its function is as follows. Plays a role in the initial induction of autophagosomes from host endoplasmic reticulum. Later, limits the expansion of these phagosomes that are no longer able to deliver viral components to lysosomes. Forms a hexadecamer with nsp8 (8 subunits of each) that may participate in viral replication by acting as a primase. Alternatively, may synthesize substantially longer products than oligonucleotide primers. Functionally, forms a hexadecamer with nsp7 (8 subunits of each) that may participate in viral replication by acting as a primase. Alternatively, may synthesize substantially longer products than oligonucleotide primers. In terms of biological role, forms a primer, NSP9-pU, which is utilized by the polymerase for the initiation of RNA chains. Interacts with ribosome signal recognition particle RNA (SRP). Together with NSP8, suppress protein integration into the cell membrane, thereby disrupting host immune defenses. Its function is as follows. Plays a pivotal role in viral transcription by stimulating both nsp14 3'-5' exoribonuclease and nsp16 2'-O-methyltransferase activities. Therefore plays an essential role in viral mRNAs cap methylation. RNA-directed RNA polymerase that catalyzes the transcription of viral genomic and subgenomic RNAs. Acts in complex with nsp7 and nsp8 to transcribe both the minus and positive strands of genomic RNA. The kinase-like NiRAN domain of NSP12 attaches one or more nucleotides to the amino terminus of NSP9, forming a covalent RNA-protein intermediate that serves as transcription/replication primer. Subgenomic RNAs (sgRNAs) are formed by discontinuous transcription: The polymerase has the ability to pause at transcription-regulating sequences (TRS) and jump to the leader TRS, resulting in a major deletion. This creates a series of subgenomic RNAs that are replicated, transcribed and translated. In addition, Nsp12 is a subunit of the viral RNA capping enzyme that catalyzes the RNA guanylyltransferase reaction for genomic and sub-genomic RNAs. Subsequently, the NiRAN domain transfers RNA to GDP, and forms the core cap structure GpppA-RNA. Functionally, multi-functional protein with a zinc-binding domain in N-terminus displaying RNA and DNA duplex-unwinding activities with 5' to 3' polarity. Activity of helicase is dependent on magnesium. In terms of biological role, plays a role in viral RNA synthesis through two distinct activities. The N7-guanine methyltransferase activity plays a role in the formation of the cap structure GpppA-RNA. The proofreading exoribonuclease reduces the sensitivity of the virus to RNA mutagens during replication. This activity acts on both ssRNA and dsRNA in a 3'-5' direction. Its function is as follows. Plays a role in viral transcription/replication and prevents the simultaneous activation of host cell dsRNA sensors, such as MDA5/IFIH1, OAS, and PKR. Acts by degrading the 5'-polyuridines generated during replication of the poly(A) region of viral genomic and subgenomic RNAs. Catalyzes a two-step reaction in which a 2'3'-cyclic phosphate (2'3'-cP) is first generated by 2'-O transesterification, which is then hydrolyzed to a 3'-phosphate (3'-P). If not degraded, poly(U) RNA would hybridize with poly(A) RNA tails and activate host dsRNA sensors. Methyltransferase that mediates mRNA cap 2'-O-ribose methylation to the 5'-cap structure of viral mRNAs. N7-methyl guanosine cap is a prerequisite for binding of nsp16. Therefore plays an essential role in viral mRNAs cap methylation which is essential to evade immune system. The protein is Replicase polyprotein 1ab (rep) of Bat coronavirus HKU9 (BtCoV).